The following is a 432-amino-acid chain: Gamma-glutamyl phosphate reductase (432 aa).

This sequence belongs to the gamma-glutamyl phosphate reductase family.

It is found in the cytoplasm. The enzyme catalyses L-glutamate 5-semialdehyde + phosphate + NADP(+) = L-glutamyl 5-phosphate + NADPH + H(+). Its pathway is amino-acid biosynthesis; L-proline biosynthesis; L-glutamate 5-semialdehyde from L-glutamate: step 2/2. Its function is as follows. Catalyzes the NADPH-dependent reduction of L-glutamate 5-phosphate into L-glutamate 5-semialdehyde and phosphate. The product spontaneously undergoes cyclization to form 1-pyrroline-5-carboxylate. This Deinococcus radiodurans (strain ATCC 13939 / DSM 20539 / JCM 16871 / CCUG 27074 / LMG 4051 / NBRC 15346 / NCIMB 9279 / VKM B-1422 / R1) protein is Gamma-glutamyl phosphate reductase.